The sequence spans 77 residues: SS18-like protein 2 (77 aa).

The SH2-binding signature appears at Tyr50–Val53.

The protein belongs to the SS18 family.

The sequence is that of SS18-like protein 2 (SS18L2) from Homo sapiens (Human).